The sequence spans 1026 residues: Multidrug resistance protein MdtC (1026 aa).

The next 11 membrane-spanning stretches (helical) occupy residues 15–35 (ILIAAAITLCGILGFRLLPVA), 333–353 (EVEETLAISVALVILVVFLFL), 360–380 (LIPAVAVPVSLIGTFAAMYLC), 387–407 (LSLMALTIATGFVVDDAIVVL), 431–451 (VGFTVISMSLSLVAVFLPLLL), 463–483 (FAVTLSVAIGISLVVSLTLTP), 528–548 (LVGVVFLGTVALNIWLYIAIP), 853–873 (LILIVAAIATVYIVLGILYES), 897–917 (LFNAPFSLIALIGIMLLIGIV), 953–973 (PIMMTTLAALFGALPLVLSGG), and 984–1004 (ITIVGGLVMSQLLTLYTTPVV).

Belongs to the resistance-nodulation-cell division (RND) (TC 2.A.6) family. MdtC subfamily. Part of a tripartite efflux system composed of MdtA, MdtB and MdtC. MdtC forms a heteromultimer with MdtB.

It localises to the cell inner membrane. The protein is Multidrug resistance protein MdtC of Salmonella enteritidis PT4 (strain P125109).